Reading from the N-terminus, the 199-residue chain is Chaperone protein TorD (199 aa).

It belongs to the TorD/DmsD family. TorD subfamily.

Its subcellular location is the cytoplasm. Involved in the biogenesis of TorA. Acts on TorA before the insertion of the molybdenum cofactor and, as a result, probably favors a conformation of the apoenzyme that is competent for acquiring the cofactor. This is Chaperone protein TorD from Escherichia coli O7:K1 (strain IAI39 / ExPEC).